Consider the following 592-residue polypeptide: Arginine--tRNA ligase (592 aa).

A 'HIGH' region motif is present at residues 128–138 (ANPTGPLHVGH).

It belongs to the class-I aminoacyl-tRNA synthetase family. In terms of assembly, monomer.

The protein localises to the cytoplasm. It catalyses the reaction tRNA(Arg) + L-arginine + ATP = L-arginyl-tRNA(Arg) + AMP + diphosphate. This Hydrogenovibrio crunogenus (strain DSM 25203 / XCL-2) (Thiomicrospira crunogena) protein is Arginine--tRNA ligase.